The sequence spans 200 residues: UPF0316 protein SACOL1973 (200 aa).

The next 3 helical transmembrane spans lie at P8–M28, I40–M60, and I66–I86.

Belongs to the UPF0316 family.

The protein localises to the cell membrane. The chain is UPF0316 protein SACOL1973 from Staphylococcus aureus (strain COL).